Here is a 221-residue protein sequence, read N- to C-terminus: Very-long-chain (3R)-3-hydroxyacyl-CoA dehydratase PASTICCINO 2B (221 aa).

Topologically, residues 1 to 11 (MTGVGSAVRRL) are cytoplasmic. Residues 12 to 32 (YLSVYNWAVFFGWAQVLYYAV) form a helical membrane-spanning segment. Residues 33–51 (TTLLESGHEAVYAAVERPL) lie on the Lumenal side of the membrane. The helical transmembrane segment at 52–70 (QFAQTAAFLEILHGLVGLV) threads the bilayer. The Cytoplasmic portion of the chain corresponds to 71-76 (RSPVSA). The chain crosses the membrane as a helical span at residues 77-95 (TLPQIGSRLFLTWGILWSF). Topologically, residues 96–100 (PETHS) are lumenal. A helical membrane pass occupies residues 101–121 (HILVTSLVISWSITEIIRYSF). Residues 122–141 (FGMKETFGFAPSWLLWLRYS) lie on the Cytoplasmic side of the membrane. The helical transmembrane segment at 142–165 (TFMVLYPTGISSEVGLIYIALPYM) threads the bilayer. Active-site residues include tyrosine 147 and glutamate 154. Over 166–184 (KATEKYCLRMPNKWNFSFD) the chain is Lumenal. A helical membrane pass occupies residues 185–209 (FSYASILSLAVYVPGSPHMFTYMLA). Topologically, residues 210–221 (QRKKALAKAKAA) are cytoplasmic.

The protein belongs to the very long-chain fatty acids dehydratase HACD family.

The protein resides in the endoplasmic reticulum membrane. The catalysed reaction is a very-long-chain (3R)-3-hydroxyacyl-CoA = a very-long-chain (2E)-enoyl-CoA + H2O. It participates in lipid metabolism; fatty acid biosynthesis. Functionally, catalyzes the third of the four reactions of the long-chain fatty acids elongation cycle. This endoplasmic reticulum-bound enzymatic process, allows the addition of two carbons to the chain of long- and very long-chain fatty acids/VLCFAs per cycle. This enzyme catalyzes the dehydration of the 3-hydroxyacyl-CoA intermediate into trans-2,3-enoyl-CoA, within each cycle of fatty acid elongation. Thereby, it participates in the production of VLCFAs of different chain lengths that are involved in multiple biological processes as precursors of membrane lipids and lipid mediators. May be an anti-phosphatase that prevents CDKA-1 dephosphorylation and activation. Involved in the hormonal control of cell division and differentiation. Required for proliferation control of meristematic and non-meristematic cells. Negative regulator of the cell cycle. In Oryza sativa subsp. japonica (Rice), this protein is Very-long-chain (3R)-3-hydroxyacyl-CoA dehydratase PASTICCINO 2B (PAS2B).